We begin with the raw amino-acid sequence, 188 residues long: Elongation factor P (188 aa).

Belongs to the elongation factor P family.

The protein localises to the cytoplasm. It functions in the pathway protein biosynthesis; polypeptide chain elongation. Functionally, involved in peptide bond synthesis. Stimulates efficient translation and peptide-bond synthesis on native or reconstituted 70S ribosomes in vitro. Probably functions indirectly by altering the affinity of the ribosome for aminoacyl-tRNA, thus increasing their reactivity as acceptors for peptidyl transferase. This chain is Elongation factor P, found in Pelodictyon phaeoclathratiforme (strain DSM 5477 / BU-1).